A 155-amino-acid polypeptide reads, in one-letter code: Transcription antitermination protein NusB (155 aa).

This sequence belongs to the NusB family.

In terms of biological role, involved in transcription antitermination. Required for transcription of ribosomal RNA (rRNA) genes. Binds specifically to the boxA antiterminator sequence of the ribosomal RNA (rrn) operons. The protein is Transcription antitermination protein NusB of Vibrio campbellii (strain ATCC BAA-1116).